The chain runs to 375 residues: Alcohol dehydrogenase 1A (375 aa).

Ser2 is modified (N-acetylserine). Ser23 is subject to Phosphoserine. At Tyr35 the chain carries Phosphotyrosine. Residue Cys47 coordinates Zn(2+). 48–52 (GTDDH) lines the NAD(+) pocket. His68, Cys98, Cys101, Cys104, Cys112, and Cys175 together coordinate Zn(2+). NAD(+) is bound by residues 200 to 205 (GLGGVG), Asp224, Lys229, Ile270, 293 to 295 (VGV), 318 to 320 (AVY), and Arg370.

Belongs to the zinc-containing alcohol dehydrogenase family. In terms of assembly, dimer of identical or heterodimer of closely related subunits alpha, beta, or gamma that are encoded by genes ADH1A, ADH1B, and ADH1C, respectively. Zn(2+) is required as a cofactor.

The protein resides in the cytoplasm. The catalysed reaction is a primary alcohol + NAD(+) = an aldehyde + NADH + H(+). It carries out the reaction a secondary alcohol + NAD(+) = a ketone + NADH + H(+). The enzyme catalyses butan-1-ol + NAD(+) = butanal + NADH + H(+). It catalyses the reaction 1-propanol + NAD(+) = propanal + NADH + H(+). The catalysed reaction is propan-2-ol + NAD(+) = acetone + NADH + H(+). Its function is as follows. Alcohol dehydrogenase. Oxidizes primary as well as secondary alcohols. Ethanol is a very poor substrate. The protein is Alcohol dehydrogenase 1A (ADH1A) of Macaca mulatta (Rhesus macaque).